The sequence spans 497 residues: UPF0371 protein DIP2346 (497 aa).

Belongs to the UPF0371 family.

This Corynebacterium diphtheriae (strain ATCC 700971 / NCTC 13129 / Biotype gravis) protein is UPF0371 protein DIP2346.